The primary structure comprises 324 residues: Succinylglutamate desuccinylase (324 aa).

Zn(2+)-binding residues include His53, Glu56, and His148. Residue Glu211 is part of the active site.

The protein belongs to the AspA/AstE family. Succinylglutamate desuccinylase subfamily. Zn(2+) is required as a cofactor.

The enzyme catalyses N-succinyl-L-glutamate + H2O = L-glutamate + succinate. Its pathway is amino-acid degradation; L-arginine degradation via AST pathway; L-glutamate and succinate from L-arginine: step 5/5. Its function is as follows. Transforms N(2)-succinylglutamate into succinate and glutamate. The protein is Succinylglutamate desuccinylase of Acinetobacter baumannii (strain AB0057).